Reading from the N-terminus, the 437-residue chain is Adenosylmethionine-8-amino-7-oxononanoate aminotransferase (437 aa).

Residue W64 participates in substrate binding. 124–125 (GS) serves as a coordination point for pyridoxal 5'-phosphate. Substrate is bound at residue Y157. D254 is a binding site for pyridoxal 5'-phosphate. Residues K283 and G316 each coordinate substrate. K283 bears the N6-(pyridoxal phosphate)lysine mark. A pyridoxal 5'-phosphate-binding site is contributed by 317–318 (PT). R400 lines the substrate pocket.

It belongs to the class-III pyridoxal-phosphate-dependent aminotransferase family. BioA subfamily. As to quaternary structure, homodimer. The cofactor is pyridoxal 5'-phosphate.

It localises to the cytoplasm. The enzyme catalyses (8S)-8-amino-7-oxononanoate + S-adenosyl-L-methionine = S-adenosyl-4-methylsulfanyl-2-oxobutanoate + (7R,8S)-7,8-diammoniononanoate. It functions in the pathway cofactor biosynthesis; biotin biosynthesis; 7,8-diaminononanoate from 8-amino-7-oxononanoate (SAM route): step 1/1. Functionally, catalyzes the transfer of the alpha-amino group from S-adenosyl-L-methionine (SAM) to 7-keto-8-aminopelargonic acid (KAPA) to form 7,8-diaminopelargonic acid (DAPA). It is the only aminotransferase known to utilize SAM as an amino donor. The sequence is that of Adenosylmethionine-8-amino-7-oxononanoate aminotransferase (bioA) from Mycobacterium tuberculosis (strain CDC 1551 / Oshkosh).